A 347-amino-acid chain; its full sequence is DNA-directed RNA polymerase subunit alpha (347 aa).

Residues 1 to 243 form an alpha N-terminal domain (alpha-NTD) region; the sequence is MLIKQGDRLI…DQISVFINFD (243 aa). Positions 260 to 347 are alpha C-terminal domain (alpha-CTD); the sequence is VNENLFKGID…EWKRKQQNEA (88 aa).

Belongs to the RNA polymerase alpha chain family. In terms of assembly, homodimer. The RNAP catalytic core consists of 2 alpha, 1 beta, 1 beta' and 1 omega subunit. When a sigma factor is associated with the core the holoenzyme is formed, which can initiate transcription.

It catalyses the reaction RNA(n) + a ribonucleoside 5'-triphosphate = RNA(n+1) + diphosphate. In terms of biological role, DNA-dependent RNA polymerase catalyzes the transcription of DNA into RNA using the four ribonucleoside triphosphates as substrates. The sequence is that of DNA-directed RNA polymerase subunit alpha from Nitratidesulfovibrio vulgaris (strain DSM 19637 / Miyazaki F) (Desulfovibrio vulgaris).